The sequence spans 296 residues: MQTFAEIAALREQIKQFKRDGRTVAFVPTMGNLHEGHLTLVKKARELADIVVVSIFVNPMQFDRADDLNNYPRTLEADLNKLTGEGVELVFTPTPEVMYPDGLDKQTFVEVPGISHMLEGASRPGHFRGVSTIVTKLFNIVQPDFACFGEKDFQQLAVIRQMTTDLALDIEVVGVATVREMDGLAMSSRNSNLTIDERQRAPVLARTMRWISSAIRGGRDDYASVIEDATDQLRAADLQPDEIFICDVKTLQAITSESTQAVILMSAFLGKTRLIDNQVLDLVSETKEEVKEETAE.

30-37 serves as a coordination point for ATP; that stretch reads MGNLHEGH. Catalysis depends on histidine 37, which acts as the Proton donor. Residue glutamine 61 coordinates (R)-pantoate. Glutamine 61 is a beta-alanine binding site. An ATP-binding site is contributed by 149–152; that stretch reads GEKD. Glutamine 155 serves as a coordination point for (R)-pantoate. ATP-binding positions include valine 178 and 186-189; that span reads MSSR.

The protein belongs to the pantothenate synthetase family. Homodimer.

It is found in the cytoplasm. The enzyme catalyses (R)-pantoate + beta-alanine + ATP = (R)-pantothenate + AMP + diphosphate + H(+). The protein operates within cofactor biosynthesis; (R)-pantothenate biosynthesis; (R)-pantothenate from (R)-pantoate and beta-alanine: step 1/1. Catalyzes the condensation of pantoate with beta-alanine in an ATP-dependent reaction via a pantoyl-adenylate intermediate. This is Pantothenate synthetase from Vibrio atlanticus (strain LGP32) (Vibrio splendidus (strain Mel32)).